The chain runs to 119 residues: Beta-2-microglobulin (119 aa).

A signal peptide spans 1–20; that stretch reads MARFVVVPLLVLLSLFGLEA. Positions 25–114 constitute an Ig-like C1-type domain; it reads PKIQVYSRYP…VTFSTPKTVK (90 aa). Residues Cys45 and Cys100 are joined by a disulfide bond.

It belongs to the beta-2-microglobulin family. Heterodimer of an alpha chain and a beta chain. Beta-2-microglobulin is the beta-chain of major histocompatibility complex class I molecules.

The protein localises to the secreted. Functionally, component of the class I major histocompatibility complex (MHC). Involved in the presentation of peptide antigens to the immune system. This chain is Beta-2-microglobulin (B2M), found in Saguinus bicolor bicolor (Pied bare-faced tamarin).